A 341-amino-acid polypeptide reads, in one-letter code: uncharacterized protein (341 aa).

Basic residues predominate over residues 1–12 (NSRIAHVPKSKK). Disordered regions lie at residues 1–21 (NSRI…SPRF) and 291–317 (KARM…NPED). A compositionally biased stretch (polar residues) spans 297–312 (SGKNYQQRPSRTTSPA).

This is an uncharacterized protein from Lachancea kluyveri (strain ATCC 58438 / CBS 3082 / BCRC 21498 / NBRC 1685 / JCM 7257 / NCYC 543 / NRRL Y-12651) (Yeast).